Consider the following 93-residue polypeptide: Pyrimidine/purine nucleoside phosphorylase (93 aa).

The protein belongs to the nucleoside phosphorylase PpnP family.

The enzyme catalyses a purine D-ribonucleoside + phosphate = a purine nucleobase + alpha-D-ribose 1-phosphate. It catalyses the reaction adenosine + phosphate = alpha-D-ribose 1-phosphate + adenine. The catalysed reaction is cytidine + phosphate = cytosine + alpha-D-ribose 1-phosphate. It carries out the reaction guanosine + phosphate = alpha-D-ribose 1-phosphate + guanine. The enzyme catalyses inosine + phosphate = alpha-D-ribose 1-phosphate + hypoxanthine. It catalyses the reaction thymidine + phosphate = 2-deoxy-alpha-D-ribose 1-phosphate + thymine. The catalysed reaction is uridine + phosphate = alpha-D-ribose 1-phosphate + uracil. It carries out the reaction xanthosine + phosphate = alpha-D-ribose 1-phosphate + xanthine. Catalyzes the phosphorolysis of diverse nucleosides, yielding D-ribose 1-phosphate and the respective free bases. Can use uridine, adenosine, guanosine, cytidine, thymidine, inosine and xanthosine as substrates. Also catalyzes the reverse reactions. The chain is Pyrimidine/purine nucleoside phosphorylase from Shewanella pealeana (strain ATCC 700345 / ANG-SQ1).